Here is a 292-residue protein sequence, read N- to C-terminus: uncharacterized protein (292 aa).

A run of 4 helical transmembrane segments spans residues 17–37 (LFYT…FPAL), 135–155 (LIAV…IGQL), 166–186 (TTLW…YDIV), and 216–236 (FHGV…TALY). Positions 267-292 (EKSEDKKSIVTSRIEEENEDEISDYE) are disordered. Residues 282 to 292 (EENEDEISDYE) show a composition bias toward acidic residues.

The protein localises to the membrane. This is an uncharacterized protein from Caenorhabditis elegans.